The sequence spans 205 residues: Dephospho-CoA kinase (205 aa).

In terms of domain architecture, DPCK spans K3–Q204. G11–E16 is a binding site for ATP.

Belongs to the CoaE family.

The protein resides in the cytoplasm. The enzyme catalyses 3'-dephospho-CoA + ATP = ADP + CoA + H(+). The protein operates within cofactor biosynthesis; coenzyme A biosynthesis; CoA from (R)-pantothenate: step 5/5. In terms of biological role, catalyzes the phosphorylation of the 3'-hydroxyl group of dephosphocoenzyme A to form coenzyme A. This chain is Dephospho-CoA kinase, found in Streptomyces avermitilis (strain ATCC 31267 / DSM 46492 / JCM 5070 / NBRC 14893 / NCIMB 12804 / NRRL 8165 / MA-4680).